A 478-amino-acid chain; its full sequence is Glutamate--tRNA ligase (478 aa).

Positions 23 to 33 (PSPTGFIHLGN) match the 'HIGH' region motif. The segment covering 130-145 (KQKPRYDGTWRPEEGK) has biased composition (basic and acidic residues). Positions 130-153 (KQKPRYDGTWRPEEGKTLPPVPEG) are disordered. Residues 255 to 259 (KMSKR) carry the 'KMSKS' region motif. An ATP-binding site is contributed by lysine 258.

The protein belongs to the class-I aminoacyl-tRNA synthetase family. Glutamate--tRNA ligase type 1 subfamily. In terms of assembly, monomer.

Its subcellular location is the cytoplasm. The catalysed reaction is tRNA(Glu) + L-glutamate + ATP = L-glutamyl-tRNA(Glu) + AMP + diphosphate. Catalyzes the attachment of glutamate to tRNA(Glu) in a two-step reaction: glutamate is first activated by ATP to form Glu-AMP and then transferred to the acceptor end of tRNA(Glu). This is Glutamate--tRNA ligase from Paracidovorax citrulli (strain AAC00-1) (Acidovorax citrulli).